The primary structure comprises 356 residues: D-alanine--D-alanine ligase (356 aa).

Residues 134 to 339 enclose the ATP-grasp domain; it reads KQLFEHRGLP…YPELITKLIE (206 aa). Residue 167-222 participates in ATP binding; that stretch reads NDKLNYPVFVKPANLGSSVGISKCNNEAELKEGIKEAFQFDRKLVIEQGVNAREIE. Mg(2+) is bound by residues Asp293, Glu306, and Asn308.

The protein belongs to the D-alanine--D-alanine ligase family. Mg(2+) is required as a cofactor. It depends on Mn(2+) as a cofactor.

It localises to the cytoplasm. It carries out the reaction 2 D-alanine + ATP = D-alanyl-D-alanine + ADP + phosphate + H(+). It participates in cell wall biogenesis; peptidoglycan biosynthesis. Functionally, cell wall formation. This chain is D-alanine--D-alanine ligase, found in Staphylococcus aureus (strain MSSA476).